A 175-amino-acid chain; its full sequence is Endoribonuclease YbeY (175 aa).

His129, His133, and His139 together coordinate Zn(2+).

This sequence belongs to the endoribonuclease YbeY family. Zn(2+) serves as cofactor.

It is found in the cytoplasm. Functionally, single strand-specific metallo-endoribonuclease involved in late-stage 70S ribosome quality control and in maturation of the 3' terminus of the 16S rRNA. This chain is Endoribonuclease YbeY, found in Lactobacillus johnsonii (strain CNCM I-12250 / La1 / NCC 533).